We begin with the raw amino-acid sequence, 205 residues long: Small ribosomal subunit protein uS4 (205 aa).

A disordered region spans residues 27 to 46; the sequence is LNKRDYAPGQHGQRRKGKPS. The 61-residue stretch at 118 to 178 folds into the S4 RNA-binding domain; the sequence is HGHVLVNGKR…HVDHRLMKGT (61 aa).

It belongs to the universal ribosomal protein uS4 family. As to quaternary structure, part of the 30S ribosomal subunit. Contacts protein S5. The interaction surface between S4 and S5 is involved in control of translational fidelity.

In terms of biological role, one of the primary rRNA binding proteins, it binds directly to 16S rRNA where it nucleates assembly of the body of the 30S subunit. With S5 and S12 plays an important role in translational accuracy. This is Small ribosomal subunit protein uS4 from Granulibacter bethesdensis (strain ATCC BAA-1260 / CGDNIH1).